We begin with the raw amino-acid sequence, 393 residues long: Homogentisate phytyltransferase 1, chloroplastic (393 aa).

A chloroplast-targeting transit peptide spans 1-36; sequence MESLLSSSSLVSAAGGFCWKKQNLKLHSLSEIRVLR. 9 helical membrane-spanning segments follow: residues 108-128, 133-153, 170-190, 205-227, 232-252, 271-291, 314-334, 338-358, and 371-391; these read TVIG…EKVS, LLFT…IYIV, YLPL…VASF, PLFW…LPLL, FALV…QIAF, LIFA…FKDI, VFWT…LVGA, FIWS…TLWA, and ITSC…LLPF.

This sequence belongs to the UbiA prenyltransferase family.

It localises to the plastid. The protein resides in the chloroplast membrane. The enzyme catalyses phytyl diphosphate + homogentisate + H(+) = 2-methyl-6-phytyl-1,4-benzene-1,4-diol + CO2 + diphosphate. Its pathway is cofactor biosynthesis; tocopherol biosynthesis. In terms of biological role, involved in the synthesis of tocopherol (vitamin E). Catalyzes the condensation of homogentisate and phytyl diphosphate to form dimethylphytylhydrquinone. Low activity with geranylgeranyl diphosphate as substrate, but no activity with farnesyl diphosphate or solanesyl diphosphate. Tocopherol functions to limit lipid oxidation during seed desiccation, quiescence and germination and early seedling development. Protects thylakoid membrane lipids from photooxidation and is required for low-temperature adaptation. This is Homogentisate phytyltransferase 1, chloroplastic (HPT1) from Arabidopsis thaliana (Mouse-ear cress).